We begin with the raw amino-acid sequence, 324 residues long: tRNA-modifying protein YgfZ (324 aa).

A folate-binding site is contributed by Trp-184.

The protein belongs to the tRNA-modifying YgfZ family.

The protein resides in the cytoplasm. Functionally, folate-binding protein involved in regulating the level of ATP-DnaA and in the modification of some tRNAs. It is probably a key factor in regulatory networks that act via tRNA modification, such as initiation of chromosomal replication. The protein is tRNA-modifying protein YgfZ of Vibrio vulnificus (strain YJ016).